We begin with the raw amino-acid sequence, 70 residues long: U-scoloptoxin(20)-Sm1a (70 aa).

The first 24 residues, 1-24, serve as a signal peptide directing secretion; that stretch reads MKKRSQVFCIFIAMVLLILPLSMS.

It belongs to the scoloptoxin-20 family. Post-translationally, contains 3 disulfide bonds. As to expression, expressed by the venom gland.

It is found in the secreted. In Scolopendra morsitans (Tanzanian blue ringleg centipede), this protein is U-scoloptoxin(20)-Sm1a.